Consider the following 497-residue polypeptide: Glycerol kinase (497 aa).

An ADP-binding site is contributed by T12. ATP-binding residues include T12, T13, and S14. A sn-glycerol 3-phosphate-binding site is contributed by T12. Residue R16 coordinates ADP. Residues R82, E83, Y134, and D243 each contribute to the sn-glycerol 3-phosphate site. Glycerol is bound by residues R82, E83, Y134, D243, and Q244. ADP is bound by residues T265 and G308. ATP-binding residues include T265, G308, Q312, and G409. ADP-binding residues include G409 and N413.

The protein belongs to the FGGY kinase family. Homotetramer and homodimer (in equilibrium).

The catalysed reaction is glycerol + ATP = sn-glycerol 3-phosphate + ADP + H(+). The protein operates within polyol metabolism; glycerol degradation via glycerol kinase pathway; sn-glycerol 3-phosphate from glycerol: step 1/1. With respect to regulation, activated by phosphorylation and inhibited by fructose 1,6-bisphosphate (FBP). Its function is as follows. Key enzyme in the regulation of glycerol uptake and metabolism. Catalyzes the phosphorylation of glycerol to yield sn-glycerol 3-phosphate. This Thermoanaerobacter sp. (strain X514) protein is Glycerol kinase.